Reading from the N-terminus, the 146-residue chain is Ribonuclease H (146 aa).

The RNase H type-1 domain occupies 4 to 145 (ELNKVVVYTD…ADMLARSQIV (142 aa)). 4 residues coordinate Mg(2+): Asp-13, Glu-51, Asp-73, and Asp-137.

The protein belongs to the RNase H family. In terms of assembly, monomer. Requires Mg(2+) as cofactor.

It is found in the cytoplasm. The catalysed reaction is Endonucleolytic cleavage to 5'-phosphomonoester.. Endonuclease that specifically degrades the RNA of RNA-DNA hybrids. The sequence is that of Ribonuclease H from Ehrlichia ruminantium (strain Gardel).